The sequence spans 859 residues: Probable helicase A859L (859 aa).

The Helicase ATP-binding domain occupies 178 to 349 (YQELRRSGRA…KNRELFGGVA (172 aa)). 191–198 (MACRCGKT) lines the ATP pocket. The DEAH box motif lies at 298 to 301 (DECH). A Helicase C-terminal domain is found at 401 to 553 (HLKTNITAPK…RFYEHLLNPS (153 aa)).

This sequence belongs to the asfivirus helicase A859L family.

The chain is Probable helicase A859L from African swine fever virus (isolate Tick/South Africa/Pretoriuskop Pr4/1996) (ASFV).